The primary structure comprises 191 residues: ADP-ribosylation factor (191 aa).

The N-myristoyl glycine moiety is linked to residue Gly2. Residues 24-31 (GLDAAGKT), 67-71 (DVGGQ), and 128-131 (NKQD) each bind GTP.

This sequence belongs to the small GTPase superfamily. Arf family.

The protein resides in the golgi apparatus. GTP-binding protein involved in protein trafficking; may modulate vesicle budding and uncoating within the Golgi apparatus. The chain is ADP-ribosylation factor from Giardia intestinalis (Giardia lamblia).